The following is a 33-amino-acid chain: Neutrophil defensin 3 (33 aa).

Cystine bridges form between Cys-3–Cys-31, Cys-5–Cys-20, and Cys-10–Cys-30.

The protein belongs to the alpha-defensin family.

It is found in the secreted. Functionally, anti-fungal and bactericidal activity, greater against Gram-positive bacteria. In Mesocricetus auratus (Golden hamster), this protein is Neutrophil defensin 3.